The chain runs to 154 residues: Transcriptional repressor NrdR (154 aa).

A zinc finger spans residues 3–34 (CPFCGHSNTQVLDTRMSEDGDAVRRRRRCEAC). Residues 49–139 (PAIVKKNGSR…VYRSFEDVAE (91 aa)) enclose the ATP-cone domain.

The protein belongs to the NrdR family. Zn(2+) is required as a cofactor.

Negatively regulates transcription of bacterial ribonucleotide reductase nrd genes and operons by binding to NrdR-boxes. The protein is Transcriptional repressor NrdR of Cupriavidus pinatubonensis (strain JMP 134 / LMG 1197) (Cupriavidus necator (strain JMP 134)).